The sequence spans 172 residues: Cold-inducible RNA-binding protein (172 aa).

The region spanning 6 to 84 is the RRM domain; the sequence is GKLFVGGLSF…RQIRVDQAGK (79 aa). The segment at 70–172 is disordered; that stretch reads KSVDGRQIRV…SYDSYATHNE (103 aa). Composition is skewed to gly residues over residues 93–105 and 114–137; these read YRGG…GFFR and FSRG…GYGG. Phosphoserine occurs at positions 130, 138, 146, 156, 159, and 163. The segment covering 138 to 172 has biased composition (low complexity); it reads SRDYYASRSQGGSYGYRSSGGSYRDSYDSYATHNE.

Interacts with EIF4G1. Associates with ribosomes. In terms of processing, methylated on arginine residues. Methylation of the RGG motifs is a prerequisite for recruitment into SGs. Post-translationally, phosphorylated by CK2, GSK3A and GSK3B. Phosphorylation by GSK3B increases RNA-binding activity to the TXN 3'-UTR transcript upon exposure to UV radiation. In terms of tissue distribution, ubiquitous.

It localises to the nucleus. The protein localises to the nucleoplasm. Its subcellular location is the cytoplasm. Functionally, cold-inducible mRNA binding protein that plays a protective role in the genotoxic stress response by stabilizing transcripts of genes involved in cell survival. Promotes assembly of stress granules (SGs), when overexpressed. Seems to play an essential role in cold-induced suppression of cell proliferation. Acts as a translational repressor. Acts as a translational activator. Binds specifically to the 3'-untranslated regions (3'-UTRs) of stress-responsive transcripts RPA2 and TXN. In Mus musculus (Mouse), this protein is Cold-inducible RNA-binding protein (Cirbp).